Here is a 146-residue protein sequence, read N- to C-terminus: uncharacterized protein (146 aa).

In terms of domain architecture, N-acetyltransferase spans 7-146; sequence LEINYKTDEL…EGHDVLLWKP (140 aa).

This is an uncharacterized protein from Staphylococcus aureus (strain COL).